The chain runs to 502 residues: MVLSHAVSESDVSVHSTFASRYVRTSLPRFKMPENSIPKEAAYQIINDELMLDGNPRLNLASFVTTWMEPECDKLIMSSINKNYVDMDEYPVTTELQNRCVNMIAHLFNAPLEEAETAVGVGTVGSSEAIMLAGLAFKRKWQNKRKAEGKPVDKPNIVTGANVQVCWEKFARYFEVELKEVKLSEGYYVMDPQQAVDMVDENTICVAAILGSTLNGEFEDVKLLNDLLVEKNKETGWDTPIHVDAASGGFIAPFLYPELEWDFRLPLVKSINVSGHKYGLVYAGIGWVIWRNKEDLPEELIFHINYLGADQPTFTLNFSKGSSQVIAQYYQLIRLGHEGYRNVMENCRENMIVLREGLEKTERFNIVSKDEGVPLVAFSLKDSSCHTEFEISDMLRRYGWIVPAYTMPPNAQHITVLRVVIREDFSRTLAERLVIDIEKVMRELDELPSRVIHKISLGQEKSESNSDNLMVTVKKSDIDKQRDIITGWKKFVADRKKTSGIC.

The residue at position 8 (Ser-8) is a Phosphoserine. Residue Lys-277 is modified to N6-(pyridoxal phosphate)lysine. The calmodulin-binding stretch occupies residues 469 to 502 (LMVTVKKSDIDKQRDIITGWKKFVADRKKTSGIC).

Belongs to the group II decarboxylase family. As to quaternary structure, homohexamer. Interacts with calmodulin with a 1:3 stoichiometry. Requires pyridoxal 5'-phosphate as cofactor. Expressed in roots. Detected at low levels in shoots of young seedlings. Not detected in the root tips or in the central vascular bundle in the elongating region of mature roots.

It catalyses the reaction L-glutamate + H(+) = 4-aminobutanoate + CO2. Its activity is regulated as follows. Up-regulated by calmodulin binding at physiological pH. Catalyzes the conversion of glutamate to 4-aminobutanoate (GABA). The calmodulin-binding is calcium-dependent and it is proposed to directly or indirectly form a calcium regulated control of GABA biosynthesis. The sequence is that of Glutamate decarboxylase 1 (GAD1) from Arabidopsis thaliana (Mouse-ear cress).